We begin with the raw amino-acid sequence, 118 residues long: MKRIAFVFSTAPHGSASGREGLDALLATSALTEALGVFFISDGVFQLLPGQKPDAVLARDYIATFKLFDLYDIDQCWICAASLRERGLENVNFVVNATPLEPVALRRELGNYDVILRF.

This sequence belongs to the DsrF/TusC family. As to quaternary structure, heterohexamer, formed by a dimer of trimers. The hexameric TusBCD complex contains 2 copies each of TusB, TusC and TusD. The TusBCD complex interacts with TusE.

It localises to the cytoplasm. Its function is as follows. Part of a sulfur-relay system required for 2-thiolation of 5-methylaminomethyl-2-thiouridine (mnm(5)s(2)U) at tRNA wobble positions. The polypeptide is Protein TusC (Salmonella typhi).